The sequence spans 236 residues: MGNLHTSIAVASICLTSAFLGCVFGLGFFVWIIYGYSIGGFFAFLSLFHLLEFYITARFQGSQLSWDSFILNNGKAYWLAMLVGLLECLLSGGKSFAKVINCLRFPSFLINFIFSVYQTSALGFLCLGQYLRSSAMVQAGQSFSHIVASKRNKDHLLVTDGIYAYVRHPSYVGFFIWALGTQMLLGNFVSTLLFSLVLWKFFSQRITTEEAYLVSFFGDSYEQYRKKVPSGIPLIP.

4 helical membrane-spanning segments follow: residues asparagine 3–valine 23, phenylalanine 24–phenylalanine 44, alanine 76–phenylalanine 96, and phenylalanine 108–glycine 128. Residues histidine 155–valine 158, tyrosine 163, and histidine 168–tyrosine 171 each bind S-adenosyl-L-methionine. The chain crosses the membrane as a helical span at residues phenylalanine 174–phenylalanine 194. Arginine 205 is a binding site for substrate. Glutamate 209 is a binding site for S-adenosyl-L-methionine.

It belongs to the class VI-like SAM-binding methyltransferase superfamily. Isoprenylcysteine carboxyl methyltransferase family.

It is found in the membrane. The catalysed reaction is [protein]-C-terminal S-[(2E,6E)-farnesyl]-L-cysteine + S-adenosyl-L-methionine = [protein]-C-terminal S-[(2E,6E)-farnesyl]-L-cysteine methyl ester + S-adenosyl-L-homocysteine. In terms of biological role, mediates C-terminal methylation of the isoprenylated C-terminal cysteine in M-factor. This chain is Protein-S-isoprenylcysteine O-methyltransferase (mam4), found in Schizosaccharomyces pombe (strain 972 / ATCC 24843) (Fission yeast).